The chain runs to 152 residues: MAGHTENEITIAAPVDLVWDMTNDLERWPELFSEYASCEVLSREANTVTFRLTMHPDENGKVWSWVSERTADREKLVVRARRVETGPFEYMNIVWEYEETPDGTRMHWTQDFAMKPDAPVDDAGMTDIINRNSPIQMALIRDRIEEVSCTTP.

It to polyketide cyclases.

The protein operates within antibiotic biosynthesis; curamycin biosynthesis. The polypeptide is Putative polyketide cyclase (curF) (Streptomyces cyaneus (Streptomyces curacoi)).